The following is a 268-amino-acid chain: Ubiquinone biosynthesis protein COQ4 homolog, mitochondrial (268 aa).

The Zn(2+) site is built by His171, Asp172, His175, and Glu187.

The protein belongs to the COQ4 family. In terms of assembly, component of a multi-subunit COQ enzyme complex. It depends on Zn(2+) as a cofactor.

The protein resides in the mitochondrion inner membrane. It catalyses the reaction a 4-hydroxy-3-methoxy-5-(all-trans-polyprenyl)benzoate + H(+) = a 2-methoxy-6-(all-trans-polyprenyl)phenol + CO2. It functions in the pathway cofactor biosynthesis; ubiquinone biosynthesis. In terms of biological role, lyase that catalyzes the C1-decarboxylation of 4-hydroxy-3-methoxy-5-(all-trans-polyprenyl)benzoic acid into 2-methoxy-6-(all-trans-polyprenyl)phenol during ubiquinone biosynthesis. This Drosophila sechellia (Fruit fly) protein is Ubiquinone biosynthesis protein COQ4 homolog, mitochondrial.